The sequence spans 436 residues: Voltage-gated purine nucleotide uniporter SLC17A9 (436 aa).

10 consecutive transmembrane segments (helical) span residues 64–84 (IVLS…GHLG), 92–112 (VILL…LLAH), 118–138 (LAFM…YFPA), 158–178 (IVGA…SLLL), 181–201 (YGWQ…VWYV), 239–259 (PAVW…FILL), 276–296 (WIFN…SGFL), 316–336 (GMGL…SSFC), 369–389 (GFLF…GVCL), and 402–422 (CLFN…LVFG).

The protein belongs to the major facilitator superfamily. Sodium/anion cotransporter family. In terms of tissue distribution, widely expressed, but more predominantly in adrenal gland, brain and thyroid.

Its subcellular location is the cytoplasmic vesicle. It localises to the secretory vesicle. The protein localises to the chromaffin granule membrane. It is found in the secretory vesicle membrane. The protein resides in the lysosome membrane. It catalyses the reaction ATP(in) = ATP(out). The catalysed reaction is ADP(in) = ADP(out). It carries out the reaction GTP(in) = GTP(out). Activity is chloride-dependent. Inhibited by AMP-PNP, gammaS-ATP, diadenosine triphosphate, 4,4'- diisothiocyanatostilbene-2,2'-disulfonate (DIDS) and Evans blue. Its function is as follows. Voltage-gated ATP nucleotide uniporter that can also transport the purine nucleotides ADP and GTP. Uses the membrane potential as the driving force to control ATP accumulation in lysosomes and secretory vesicles. By controlling ATP storage in lysosomes, regulates ATP-dependent proteins of these organelles. Also indirectly regulates the exocytosis of ATP through its import into lysosomes in astrocytes and secretory vesicles such as adrenal chromaffin granules, mucin granules and synaptic vesicles. This Homo sapiens (Human) protein is Voltage-gated purine nucleotide uniporter SLC17A9.